Consider the following 167-residue polypeptide: Cell division protein SepF (167 aa).

Residues 25–64 form a disordered region; the sequence is EEDVAPVNNSTFQEKKHKKRSAVQRKQKNSDQEGDSVVPL. Residues 39–51 show a composition bias toward basic residues; the sequence is KKHKKRSAVQRKQ.

It belongs to the SepF family. In terms of assembly, homodimer. Interacts with FtsZ.

The protein localises to the cytoplasm. In terms of biological role, cell division protein that is part of the divisome complex and is recruited early to the Z-ring. Probably stimulates Z-ring formation, perhaps through the cross-linking of FtsZ protofilaments. Its function overlaps with FtsA. The sequence is that of Cell division protein SepF from Natranaerobius thermophilus (strain ATCC BAA-1301 / DSM 18059 / JW/NM-WN-LF).